We begin with the raw amino-acid sequence, 343 residues long: S-adenosylmethionine:tRNA ribosyltransferase-isomerase (343 aa).

Belongs to the QueA family. Monomer.

It is found in the cytoplasm. It carries out the reaction 7-aminomethyl-7-carbaguanosine(34) in tRNA + S-adenosyl-L-methionine = epoxyqueuosine(34) in tRNA + adenine + L-methionine + 2 H(+). It participates in tRNA modification; tRNA-queuosine biosynthesis. Functionally, transfers and isomerizes the ribose moiety from AdoMet to the 7-aminomethyl group of 7-deazaguanine (preQ1-tRNA) to give epoxyqueuosine (oQ-tRNA). In Pseudoalteromonas translucida (strain TAC 125), this protein is S-adenosylmethionine:tRNA ribosyltransferase-isomerase.